The sequence spans 314 residues: Methylglutaconyl-CoA hydratase, mitochondrial (314 aa).

A mitochondrion-targeting transit peptide spans 1 to 42; it reads MAAAAPGALGALRTGRVRLVAACCARLGPAAWARGTAPRRGY. K75 carries the post-translational modification N6-acetyllysine; alternate. K75 carries the post-translational modification N6-succinyllysine; alternate. The RNA-binding stretch occupies residues 80 to 94; sequence KNLLKMLSKAVDALK. An N6-succinyllysine modification is found at K84. 2 positions are modified to N6-acetyllysine; alternate: K88 and K119. N6-succinyllysine; alternate occurs at positions 88 and 119. An N6-succinyllysine mark is found at K123 and K135. N6-acetyllysine; alternate is present on residues K179 and K186. N6-succinyllysine; alternate occurs at positions 179 and 186. An N6-succinyllysine modification is found at K304.

Belongs to the enoyl-CoA hydratase/isomerase family. As to quaternary structure, homohexamer. As to expression, detected in heart, brain, liver, spleen, skeletal muscle and kidney. Expressed in brain, kidney, liver and spleen tissue (at protein level).

The protein localises to the mitochondrion. It carries out the reaction (3S)-3-hydroxy-3-methylglutaryl-CoA = 3-methyl-(2E)-glutaconyl-CoA + H2O. It catalyses the reaction (3S)-citramalyl-CoA = itaconyl-CoA + H2O. The enzyme catalyses 3-hydroxyisovaleryl-CoA = 3-methylbut-2-enoyl-CoA + H2O. The catalysed reaction is (S)-3-hydroxyglutaryl-CoA = (2E)-glutaconyl-CoA + H2O. It participates in amino-acid degradation; L-leucine degradation; (S)-3-hydroxy-3-methylglutaryl-CoA from 3-isovaleryl-CoA: step 3/3. Catalyzes the fifth step in the leucine degradation pathway, the reversible hydration of 3-methylglutaconyl-CoA (3-MG-CoA) to 3-hydroxy-3-methylglutaryl-CoA (HMG-CoA). Can catalyze the reverse reaction but at a much lower rate in vitro. HMG-CoA is then quickly degraded by another enzyme (such as HMG-CoA lyase) to give acetyl-CoA and acetoacetate. Uses other substrates such as (2E)-glutaconyl-CoA efficiently in vitro, and to a lesser extent 3-methylcrotonyl-CoA (3-methyl-(2E)-butenoyl-CoA), crotonyl-CoA ((2E)-butenoyl-CoA) and 3-hydroxybutanoyl-CoA (the missing carboxylate reduces affinity to the active site). Originally it was identified as an RNA-binding protein as it binds to AU-rich elements (AREs) in vitro. AREs direct rapid RNA degradation and mRNA deadenylation. Might have itaconyl-CoA hydratase activity, converting itaconyl-CoA into citramalyl-CoA in the C5-dicarboxylate catabolism pathway. The C5-dicarboxylate catabolism pathway is required to detoxify itaconate, an antimicrobial metabolite and immunomodulator produced by macrophages during certain infections, that can act as a vitamin B12-poisoning metabolite. The polypeptide is Methylglutaconyl-CoA hydratase, mitochondrial (Auh) (Mus musculus (Mouse)).